We begin with the raw amino-acid sequence, 137 residues long: NADH-quinone oxidoreductase subunit A 1 (137 aa).

3 helical membrane passes run 14–34 (FAAF…VSAL), 66–86 (FYLV…LFAW), and 95–115 (WAGL…LVYL).

The protein belongs to the complex I subunit 3 family. NDH-1 is composed of 13 different subunits. Subunits NuoA, H, J, K, L, M, N constitute the membrane sector of the complex.

The protein resides in the cell inner membrane. The catalysed reaction is a quinone + NADH + 5 H(+)(in) = a quinol + NAD(+) + 4 H(+)(out). In terms of biological role, NDH-1 shuttles electrons from NADH, via FMN and iron-sulfur (Fe-S) centers, to quinones in the respiratory chain. The immediate electron acceptor for the enzyme in this species is believed to be ubiquinone. Couples the redox reaction to proton translocation (for every two electrons transferred, four hydrogen ions are translocated across the cytoplasmic membrane), and thus conserves the redox energy in a proton gradient. The chain is NADH-quinone oxidoreductase subunit A 1 from Pseudomonas paraeruginosa (strain DSM 24068 / PA7) (Pseudomonas aeruginosa (strain PA7)).